Reading from the N-terminus, the 155-residue chain is Large ribosomal subunit protein uL22 (155 aa).

The tract at residues 109 to 155 (HITVIVESRPPKKAGKQGASASAARARRAQASKAATKKATDSKEGSE) is disordered. The segment covering 146 to 155 (KATDSKEGSE) has biased composition (basic and acidic residues).

This sequence belongs to the universal ribosomal protein uL22 family. In terms of assembly, part of the 50S ribosomal subunit.

Its function is as follows. This protein binds specifically to 23S rRNA; its binding is stimulated by other ribosomal proteins, e.g. L4, L17, and L20. It is important during the early stages of 50S assembly. It makes multiple contacts with different domains of the 23S rRNA in the assembled 50S subunit and ribosome. In terms of biological role, the globular domain of the protein is located near the polypeptide exit tunnel on the outside of the subunit, while an extended beta-hairpin is found that lines the wall of the exit tunnel in the center of the 70S ribosome. This chain is Large ribosomal subunit protein uL22, found in Mycolicibacterium vanbaalenii (strain DSM 7251 / JCM 13017 / BCRC 16820 / KCTC 9966 / NRRL B-24157 / PYR-1) (Mycobacterium vanbaalenii).